Reading from the N-terminus, the 138-residue chain is Small ribosomal subunit protein uS12 (138 aa).

The tract at residues 33–55 (KEHTNVSSPQKRGVCTRVGTMTP) is disordered.

This sequence belongs to the universal ribosomal protein uS12 family. Part of the 30S ribosomal subunit. Contacts proteins S8 and S17. May interact with IF1 in the 30S initiation complex. Interacts with BrxC.

Functionally, with S4 and S5 plays an important role in translational accuracy. Its function is as follows. Interacts with and stabilizes bases of the 16S rRNA that are involved in tRNA selection in the A site and with the mRNA backbone. Located at the interface of the 30S and 50S subunits, it traverses the body of the 30S subunit contacting proteins on the other side and probably holding the rRNA structure together. The combined cluster of proteins S8, S12 and S17 appears to hold together the shoulder and platform of the 30S subunit. In Bacillus subtilis (strain 168), this protein is Small ribosomal subunit protein uS12 (rpsL).